The sequence spans 301 residues: Acetylglutamate kinase (301 aa).

Residues 68 to 69 (GG), arginine 90, and asparagine 195 each bind substrate.

The protein belongs to the acetylglutamate kinase family. ArgB subfamily.

It localises to the cytoplasm. It carries out the reaction N-acetyl-L-glutamate + ATP = N-acetyl-L-glutamyl 5-phosphate + ADP. It participates in amino-acid biosynthesis; L-arginine biosynthesis; N(2)-acetyl-L-ornithine from L-glutamate: step 2/4. Its function is as follows. Catalyzes the ATP-dependent phosphorylation of N-acetyl-L-glutamate. The chain is Acetylglutamate kinase from Ectopseudomonas mendocina (strain ymp) (Pseudomonas mendocina).